Here is a 299-residue protein sequence, read N- to C-terminus: Oxygen-dependent coproporphyrinogen-III oxidase (299 aa).

A substrate-binding site is contributed by serine 92. A divalent metal cation is bound by residues histidine 96 and histidine 106. Histidine 106 (proton donor) is an active-site residue. Residue 108–110 (NVR) coordinates substrate. The a divalent metal cation site is built by histidine 145 and histidine 175. The important for dimerization stretch occupies residues 240-275 (YVEFNLVWDRGTLFGLQTGGRTESILMSMPPLVRWE). 258–260 (GGR) contacts substrate.

The protein belongs to the aerobic coproporphyrinogen-III oxidase family. Homodimer. The cofactor is a divalent metal cation.

It localises to the cytoplasm. The enzyme catalyses coproporphyrinogen III + O2 + 2 H(+) = protoporphyrinogen IX + 2 CO2 + 2 H2O. Its pathway is porphyrin-containing compound metabolism; protoporphyrin-IX biosynthesis; protoporphyrinogen-IX from coproporphyrinogen-III (O2 route): step 1/1. In terms of biological role, involved in the heme biosynthesis. Catalyzes the aerobic oxidative decarboxylation of propionate groups of rings A and B of coproporphyrinogen-III to yield the vinyl groups in protoporphyrinogen-IX. The polypeptide is Oxygen-dependent coproporphyrinogen-III oxidase (Salmonella typhi).